We begin with the raw amino-acid sequence, 266 residues long: 2-C-methyl-D-erythritol 4-phosphate cytidylyltransferase (266 aa).

Residues 234–251 are compositionally biased toward basic and acidic residues; that stretch reads ADDARSAEARSAEARSEE. The interval 234–266 is disordered; that stretch reads ADDARSAEARSAEARSEEPQFAGARSTDARSGG.

Belongs to the IspD/TarI cytidylyltransferase family. IspD subfamily.

The catalysed reaction is 2-C-methyl-D-erythritol 4-phosphate + CTP + H(+) = 4-CDP-2-C-methyl-D-erythritol + diphosphate. It participates in isoprenoid biosynthesis; isopentenyl diphosphate biosynthesis via DXP pathway; isopentenyl diphosphate from 1-deoxy-D-xylulose 5-phosphate: step 2/6. Functionally, catalyzes the formation of 4-diphosphocytidyl-2-C-methyl-D-erythritol from CTP and 2-C-methyl-D-erythritol 4-phosphate (MEP). The protein is 2-C-methyl-D-erythritol 4-phosphate cytidylyltransferase of Frankia casuarinae (strain DSM 45818 / CECT 9043 / HFP020203 / CcI3).